The chain runs to 98 residues: Integration host factor subunit alpha (98 aa).

Residues 49–71 form a disordered region; sequence FGNFDLRDKNQRPGRNPKTGEDI.

The protein belongs to the bacterial histone-like protein family. As to quaternary structure, heterodimer of an alpha and a beta chain.

Functionally, this protein is one of the two subunits of integration host factor, a specific DNA-binding protein that functions in genetic recombination as well as in transcriptional and translational control. The chain is Integration host factor subunit alpha from Edwardsiella ictaluri (strain 93-146).